A 129-amino-acid polypeptide reads, in one-letter code: Lysozyme C (129 aa).

In terms of domain architecture, C-type lysozyme spans 1-129; the sequence is KVYGRCELAA…VHAWIRGCRL (129 aa). Cystine bridges form between Cys6–Cys127, Cys30–Cys115, Cys64–Cys80, and Cys76–Cys94. Active-site residues include Glu35 and Asp52.

The protein belongs to the glycosyl hydrolase 22 family. In terms of assembly, monomer.

It is found in the secreted. It carries out the reaction Hydrolysis of (1-&gt;4)-beta-linkages between N-acetylmuramic acid and N-acetyl-D-glucosamine residues in a peptidoglycan and between N-acetyl-D-glucosamine residues in chitodextrins.. Functionally, lysozymes have primarily a bacteriolytic function; those in tissues and body fluids are associated with the monocyte-macrophage system and enhance the activity of immunoagents. This is Lysozyme C (LYZ) from Tragopan temminckii (Temminck's tragopan).